The following is an 893-amino-acid chain: NEDD4-binding protein 1 (893 aa).

The 85-residue stretch at 59 to 143 (QEAVHSAKEY…IQQFVKLFES (85 aa)) folds into the KH-like domain. Residues 213-243 (EYTQSAATGPSSARDEVVVQEDSRNKARTPV) form a disordered region. Over residues 214–223 (YTQSAATGPS) the composition is skewed to polar residues. A compositionally biased stretch (basic and acidic residues) spans 225–237 (ARDEVVVQEDSRN). A Phosphothreonine modification is found at threonine 241. Residues serine 257, serine 269, and serine 299 each carry the phosphoserine modification. Disordered stretches follow at residues 273-339 (DALS…DGKD), 394-433 (RDFP…QSHT), and 472-564 (IWGS…PPLP). Composition is skewed to polar residues over residues 405 to 433 (ASQS…QSHT) and 523 to 537 (GFQQ…NNTK). Pro residues predominate over residues 551–564 (QPKPNYPPLSPPLP). Serine 560 bears the Phosphoserine mark. One can recognise an RNase NYN domain in the interval 615-767 (LKHIVIDGSN…LGRNGPRLEE (153 aa)). Positions 793–820 (PGFRSPSTQVANNSHQPPPRIQTSSSPW) are disordered. Over residues 797–820 (SPSTQVANNSHQPPPRIQTSSSPW) the composition is skewed to polar residues. Residues 846–893 (RSSAETSELREALLKIFPDSEQKLKIDQILAAHPYMKDLNALSALVLD) are coCUN.

It belongs to the N4BP1 family. Interacts with NEDD4. Interacts with ITCH (via WW domain 2). In terms of processing, proteolytically cleaved by CASP8 downstream of TLR3 or TLR4, leading to its inactivation. Mainly cleaved at Asp-488 by CASP8. Cleaved by caspase-like protein MALT1, leading to its inactivation. Mono- and polyubiquitinated on the CoCUN region. Monoubiquitinated by NEDD4. Polyubiquitinated, leading to its degradation by the proteasome. Sumoylated with SUMO1, abrogating polyubiquitination and subsequent degradation. Desumoylated by SENP1, leading to accumulation in PML nuclear bodies.

It is found in the cytoplasm. Its subcellular location is the cytosol. The protein resides in the nucleus. It localises to the nucleolus. The protein localises to the PML body. With respect to regulation, proteolytic cleavage by CASP8 or MALT1 leads to its inactivation. Potent suppressor of cytokine production that acts as a regulator of innate immune signaling and inflammation. Acts as a key negative regulator of select cytokine and chemokine responses elicited by TRIF-independent Toll-like receptors (TLRs), thereby limiting inflammatory cytokine responses to minor insults. In response to more threatening pathogens, cleaved by CASP8 downstream of TLR3 or TLR4, leading to its inactivation, thereby allowing production of inflammatory cytokines. Acts as a restriction factor against some viruses: restricts viral replication by binding to mRNA viruses and mediating their degradation via its ribonuclease activity. Also acts as an inhibitor of the E3 ubiquitin-protein ligase ITCH: acts by interacting with the second WW domain of ITCH, leading to compete with ITCH's substrates and impairing ubiquitination of substrates. The polypeptide is NEDD4-binding protein 1 (Mus musculus (Mouse)).